The primary structure comprises 482 residues: 23S rRNA (uracil(1939)-C(5))-methyltransferase RlmD (482 aa).

[4Fe-4S] cluster contacts are provided by cysteine 85, cysteine 95, cysteine 98, and cysteine 177. S-adenosyl-L-methionine is bound by residues glutamine 285, phenylalanine 314, asparagine 319, glutamate 335, asparagine 370, and aspartate 391. Cysteine 438 acts as the Nucleophile in catalysis.

The protein belongs to the class I-like SAM-binding methyltransferase superfamily. RNA M5U methyltransferase family. RlmD subfamily.

It carries out the reaction uridine(1939) in 23S rRNA + S-adenosyl-L-methionine = 5-methyluridine(1939) in 23S rRNA + S-adenosyl-L-homocysteine + H(+). Its function is as follows. Catalyzes the formation of 5-methyl-uridine at position 1939 (m5U1939) in 23S rRNA. This chain is 23S rRNA (uracil(1939)-C(5))-methyltransferase RlmD, found in Acidovorax sp. (strain JS42).